A 426-amino-acid chain; its full sequence is Tol-Pal system protein TolB (426 aa).

Positions 1–24 (MKLKSRYTSLISVVSIFFSSMVMA) are cleaved as a signal peptide.

The protein belongs to the TolB family. As to quaternary structure, the Tol-Pal system is composed of five core proteins: the inner membrane proteins TolA, TolQ and TolR, the periplasmic protein TolB and the outer membrane protein Pal. They form a network linking the inner and outer membranes and the peptidoglycan layer.

The protein localises to the periplasm. Functionally, part of the Tol-Pal system, which plays a role in outer membrane invagination during cell division and is important for maintaining outer membrane integrity. The polypeptide is Tol-Pal system protein TolB (Haemophilus ducreyi (strain 35000HP / ATCC 700724)).